The sequence spans 596 residues: Phosphoprotein (596 aa).

Composition is skewed to polar residues over residues 1 to 11 (MENNAKDNQIM), 38 to 66 (TDSQENTADSNEVNTGNKRLSTTIYQLES), and 74 to 85 (ENSGSVNENRQL). Disordered stretches follow at residues 1–25 (MENNAKDNQIMDSWEEGSGDKSSDI), 38–196 (TDSQ…ESIS), and 220–352 (KNTR…EEST). The N0 binding stretch occupies residues 33 to 41 (EFILSTDSQ). Basic and acidic residues predominate over residues 88 to 97 (SHERATETKN). Residues 127 to 144 (ISRSSPDPNNGTQIQESI) show a composition bias toward polar residues. Composition is skewed to basic and acidic residues over residues 151–168 (EMDKDSAKREMRQSKDVP) and 233–249 (EDDKGIKKGVGKPEDTN). The span at 270–324 (TLKISTTTGESTRPQSGSQGKRITSWNILNSESGSRTESTSQNSQIPTSGKSNTV) shows a compositional bias: polar residues. The segment covering 331–352 (LESRIKTQKTDGKEREDTEEST) has biased composition (basic and acidic residues). The segment at 374–441 (LDLYQDKRVV…KMDESHRRLI (68 aa)) is multimerization. The stretch at 416–436 (LNQIQNEILSLKTDLKKMDES) forms a coiled coil. Residues 442 to 475 (ENQKEQLSLITSLISNLKIMTERGGKKDQPENSG) form a l protein binding region.

It belongs to the respirovirus P protein family. Homotetramer. Interacts (via multimerization domain) with polymerase L; this interaction forms the polymerase complex. Interacts (via N-terminus) with N0; this interaction allows P to chaperon N0 before encapsidation and form the N-P complex. Interacts (via C-terminus) with N-RNA template; this interaction positions the polymerase on the template.

Functionally, essential cofactor of the RNA polymerase L that plays a central role in the transcription and replication by forming the polymerase complex with RNA polymerase L and recruiting L to the genomic N-RNA template for RNA synthesis. Also plays a central role in the encapsidation of nascent RNA chains by forming the encapsidation complex with the nucleocapsid protein N (N-P complex). Acts as a chaperone for newly synthesized free N protein, so-called N0, allowing encapsidation of nascent RNA chains during replication. The nucleoprotein protein N prevents excessive phosphorylation of P, which leads to down-regulation of viral transcription/ replication. Participates, together with N, in the formation of viral factories (viroplasms), which are large inclusions in the host cytoplasm where replication takes place. Recruits host PI4KB and remodel the host endoplasmic reticulum membrane to form viral replication factories. In Bovine parainfluenza 3 virus (BPIV-3), this protein is Phosphoprotein (P/V/D).